The following is a 218-amino-acid chain: UPF0319 protein PM0395 (218 aa).

An N-terminal signal peptide occupies residues 1–21 (MKFRFAALASVALLTSTVSVA).

It belongs to the UPF0319 family.

The sequence is that of UPF0319 protein PM0395 from Pasteurella multocida (strain Pm70).